A 327-amino-acid polypeptide reads, in one-letter code: L-lactate dehydrogenase (327 aa).

NAD(+) contacts are provided by residues V18, D39, K44, Y69, and 83 to 84; that span reads GA. Substrate-binding positions include Q86, R92, and 124–127; that span reads NPVD. NAD(+)-binding positions include 122–124 and S147; that span reads AAN. 152–155 is a substrate binding site; the sequence is DSAR. Residues R157 and H172 each coordinate beta-D-fructose 1,6-bisphosphate. Catalysis depends on H179, which acts as the Proton acceptor. Position 224 is a phosphotyrosine (Y224). A substrate-binding site is contributed by T233.

This sequence belongs to the LDH/MDH superfamily. LDH family. As to quaternary structure, homotetramer.

The protein resides in the cytoplasm. It catalyses the reaction (S)-lactate + NAD(+) = pyruvate + NADH + H(+). Its pathway is fermentation; pyruvate fermentation to lactate; (S)-lactate from pyruvate: step 1/1. Allosterically activated by fructose 1,6-bisphosphate (FBP). In terms of biological role, catalyzes the conversion of lactate to pyruvate. In Streptococcus uberis (strain ATCC BAA-854 / 0140J), this protein is L-lactate dehydrogenase.